Here is a 590-residue protein sequence, read N- to C-terminus: ATP-dependent lipid A-core flippase (590 aa).

6 consecutive transmembrane segments (helical) span residues 31 to 51, 74 to 94, 132 to 152, 159 to 179, 259 to 279, and 286 to 306; these read IFIA…VIPK, AILT…GYLL, AVIF…ITLV, VALL…VSVI, VTAF…MIQA, and IGGF…LKHL. One can recognise an ABC transmembrane type-1 domain in the interval 33–315; the sequence is IAAILAMAVV…LTDINQPLTR (283 aa). Residues 347–585 enclose the ABC transporter domain; sequence LVFERVGFRY…NGLYAGLHRI (239 aa). Residue 381–388 coordinates ATP; sequence GPSGSGKT.

The protein belongs to the ABC transporter superfamily. Lipid exporter (TC 3.A.1.106) family. As to quaternary structure, homodimer.

Its subcellular location is the cell inner membrane. The catalysed reaction is ATP + H2O + lipid A-core oligosaccharideSide 1 = ADP + phosphate + lipid A-core oligosaccharideSide 2.. In terms of biological role, involved in lipopolysaccharide (LPS) biosynthesis. Translocates lipid A-core from the inner to the outer leaflet of the inner membrane. Transmembrane domains (TMD) form a pore in the inner membrane and the ATP-binding domain (NBD) is responsible for energy generation. In Cupriavidus pinatubonensis (strain JMP 134 / LMG 1197) (Cupriavidus necator (strain JMP 134)), this protein is ATP-dependent lipid A-core flippase.